Here is a 298-residue protein sequence, read N- to C-terminus: Ribosomal RNA small subunit methyltransferase A (298 aa).

Positions 35, 37, 62, 83, 108, and 133 each coordinate S-adenosyl-L-methionine.

The protein belongs to the class I-like SAM-binding methyltransferase superfamily. rRNA adenine N(6)-methyltransferase family. RsmA subfamily.

The protein resides in the cytoplasm. It carries out the reaction adenosine(1518)/adenosine(1519) in 16S rRNA + 4 S-adenosyl-L-methionine = N(6)-dimethyladenosine(1518)/N(6)-dimethyladenosine(1519) in 16S rRNA + 4 S-adenosyl-L-homocysteine + 4 H(+). Specifically dimethylates two adjacent adenosines (A1518 and A1519) in the loop of a conserved hairpin near the 3'-end of 16S rRNA in the 30S particle. May play a critical role in biogenesis of 30S subunits. The polypeptide is Ribosomal RNA small subunit methyltransferase A (Streptococcus pyogenes serotype M4 (strain MGAS10750)).